The primary structure comprises 235 residues: Protein YIP4 (235 aa).

5 helical membrane passes run 89–109 (ISAN…SLFV), 114–134 (SLFS…ALHL), 145–165 (LISY…NALV), 186–206 (VLSL…VAAV), and 215–235 (IIEI…STIL).

This sequence belongs to the YIP1 family. In terms of assembly, interacts with TVP18, TVP23, YIP1 and YIP5. Interacts with SEC4, YPT1, YPT6, YPT7, YPT10, YPT11, YPT31, YPT32 and YPT52; These proteins are all Rab GTPases.

The protein resides in the golgi apparatus membrane. In terms of biological role, may be involved in proper membrane localization of Rab GTPases. The sequence is that of Protein YIP4 (YIP4) from Saccharomyces cerevisiae (strain ATCC 204508 / S288c) (Baker's yeast).